Reading from the N-terminus, the 124-residue chain is MPTIQQLVRKGRTPKVVKTKAPALKANPQQRGVCTRVYTTTPKKPNSALRKVARVKLSNGQEVTAYIPGEGHNLQEHSMVLVRGGRVKDLPGVRYKIVRGALDTQAVKNRKQARSRYGAKMEKK.

Positions 1–20 (MPTIQQLVRKGRTPKVVKTK) are disordered. Residues 9 to 18 (RKGRTPKVVK) are compositionally biased toward basic residues. Position 89 is a 3-methylthioaspartic acid (Asp-89).

Belongs to the universal ribosomal protein uS12 family. In terms of assembly, part of the 30S ribosomal subunit. Contacts proteins S8 and S17. May interact with IF1 in the 30S initiation complex.

In terms of biological role, with S4 and S5 plays an important role in translational accuracy. Functionally, interacts with and stabilizes bases of the 16S rRNA that are involved in tRNA selection in the A site and with the mRNA backbone. Located at the interface of the 30S and 50S subunits, it traverses the body of the 30S subunit contacting proteins on the other side and probably holding the rRNA structure together. The combined cluster of proteins S8, S12 and S17 appears to hold together the shoulder and platform of the 30S subunit. The chain is Small ribosomal subunit protein uS12 from Clavibacter michiganensis subsp. michiganensis (strain NCPPB 382).